The sequence spans 471 residues: Heat shock 70 kDa protein 13 (471 aa).

Residues M1–A22 form the signal peptide. Residues D317–K330 are compositionally biased toward basic and acidic residues. The segment at D317 to S350 is disordered.

It belongs to the heat shock protein 70 family. As to quaternary structure, binds UBQLN2.

It is found in the microsome. It localises to the endoplasmic reticulum. In terms of biological role, has peptide-independent ATPase activity. This Mus musculus (Mouse) protein is Heat shock 70 kDa protein 13 (Hspa13).